Reading from the N-terminus, the 102-residue chain is Small ribosomal subunit protein uS10 (102 aa).

This sequence belongs to the universal ribosomal protein uS10 family. Part of the 30S ribosomal subunit.

In terms of biological role, involved in the binding of tRNA to the ribosomes. This chain is Small ribosomal subunit protein uS10, found in Streptococcus mutans serotype c (strain ATCC 700610 / UA159).